The primary structure comprises 214 residues: 3-isopropylmalate dehydratase small subunit (214 aa).

It belongs to the LeuD family. LeuD type 1 subfamily. As to quaternary structure, heterodimer of LeuC and LeuD.

It carries out the reaction (2R,3S)-3-isopropylmalate = (2S)-2-isopropylmalate. Its pathway is amino-acid biosynthesis; L-leucine biosynthesis; L-leucine from 3-methyl-2-oxobutanoate: step 2/4. Functionally, catalyzes the isomerization between 2-isopropylmalate and 3-isopropylmalate, via the formation of 2-isopropylmaleate. This chain is 3-isopropylmalate dehydratase small subunit, found in Nitrosococcus oceani (strain ATCC 19707 / BCRC 17464 / JCM 30415 / NCIMB 11848 / C-107).